The sequence spans 250 residues: Small ribosomal subunit protein uS3 (250 aa).

The region spanning 39-111 is the KH type-2 domain; it reads IRTLIKNHYP…KIQINIFEVK (73 aa).

The protein belongs to the universal ribosomal protein uS3 family. As to quaternary structure, part of the 30S ribosomal subunit. Forms a tight complex with proteins S10 and S14.

Its function is as follows. Binds the lower part of the 30S subunit head. Binds mRNA in the 70S ribosome, positioning it for translation. The chain is Small ribosomal subunit protein uS3 from Elm witches'-broom phytoplasma.